A 144-amino-acid chain; its full sequence is Small ribosomal subunit protein eS19B (144 aa).

This sequence belongs to the eukaryotic ribosomal protein eS19 family. As to quaternary structure, component of the small ribosomal subunit (SSU). Mature yeast ribosomes consist of a small (40S) and a large (60S) subunit. The 40S small subunit contains 1 molecule of ribosomal RNA (18S rRNA) and 33 different proteins (encoded by 57 genes). The large 60S subunit contains 3 rRNA molecules (25S, 5.8S and 5S rRNA) and 46 different proteins (encoded by 81 genes).

It localises to the cytoplasm. Component of the ribosome, a large ribonucleoprotein complex responsible for the synthesis of proteins in the cell. The small ribosomal subunit (SSU) binds messenger RNAs (mRNAs) and translates the encoded message by selecting cognate aminoacyl-transfer RNA (tRNA) molecules. The large subunit (LSU) contains the ribosomal catalytic site termed the peptidyl transferase center (PTC), which catalyzes the formation of peptide bonds, thereby polymerizing the amino acids delivered by tRNAs into a polypeptide chain. The nascent polypeptides leave the ribosome through a tunnel in the LSU and interact with protein factors that function in enzymatic processing, targeting, and the membrane insertion of nascent chains at the exit of the ribosomal tunnel. eS19 is required for proper maturation of the small (40S) ribosomal subunit. Binds to 40S pre-ribosomal particles, probably required after association of NOC4 but before association of ENP1, TSR1 and RIO2 with 20/21S pre-rRNA. Its function is as follows. Required for proper maturation of the small (40S) ribosomal subunit. Binds to 40s pre-ribosomal particles, probably required after association of NOC4 but before association of ENP1, TSR1 and RIO2 with 20/21S pre-rRNA. This chain is Small ribosomal subunit protein eS19B, found in Saccharomyces cerevisiae (strain ATCC 204508 / S288c) (Baker's yeast).